The primary structure comprises 88 residues: Small ribosomal subunit protein uS15 (88 aa).

This sequence belongs to the universal ribosomal protein uS15 family. Part of the 30S ribosomal subunit. Forms a bridge to the 50S subunit in the 70S ribosome, contacting the 23S rRNA.

Its function is as follows. One of the primary rRNA binding proteins, it binds directly to 16S rRNA where it helps nucleate assembly of the platform of the 30S subunit by binding and bridging several RNA helices of the 16S rRNA. In terms of biological role, forms an intersubunit bridge (bridge B4) with the 23S rRNA of the 50S subunit in the ribosome. The polypeptide is Small ribosomal subunit protein uS15 (Geotalea uraniireducens (strain Rf4) (Geobacter uraniireducens)).